A 241-amino-acid chain; its full sequence is PRA1 family protein H (241 aa).

3 consecutive transmembrane segments (helical) span residues 142 to 162 (LFIVFFACALYQMPLALVGLL), 189 to 205 (LSIGIGQCATAVLLTFL), and 209 to 228 (MALFSALAISYSVMILHAGF).

It belongs to the PRA1 family.

Its subcellular location is the endoplasmic reticulum membrane. In terms of biological role, may be involved in both secretory and endocytic intracellular trafficking in the endosomal/prevacuolar compartments. The chain is PRA1 family protein H (PRA1H) from Arabidopsis thaliana (Mouse-ear cress).